A 333-amino-acid chain; its full sequence is Atrochrysone carboxyl ACP thioesterase (333 aa).

Zn(2+) contacts are provided by His-104, His-106, Asp-108, and His-109. Catalysis depends on Asp-108, which acts as the Proton donor/acceptor.

This sequence belongs to the metallo-beta-lactamase superfamily. It depends on Zn(2+) as a cofactor.

It carries out the reaction atrochrysone carboxyl-[ACP] + H2O = atrochrysone carboxylate + holo-[ACP] + H(+). It participates in pigment biosynthesis. Atrochrysone carboxyl ACP thioesterase; part of the gene cluster that mediates the biosynthesis of the bianthraquinone cladofulvin, a conidial pigment not required for virulence but that plays a role in fitness and resistance to environmental stresses including UV light and low-temperature stress. The pathway begins with the synthesis of atrochrysone thioester by the polyketide synthase (PKS) claG. The atrochrysone carboxyl ACP thioesterase claF then breaks the thioester bond and releases the atrochrysone carboxylic acid from claG. This compound is decarboxylated by claH to yield emodin, which is further converted to chrysophanol hydroquinone by the reductase claC and the dehydratase claB. The cytochrome P450 monooxygenase claM then catalyzes the dimerization of nataloe-emodin to cladofulvin. This chain is Atrochrysone carboxyl ACP thioesterase, found in Passalora fulva (Tomato leaf mold).